The chain runs to 102 residues: Head completion protein gp15 (102 aa).

This sequence belongs to the Caudoviricetes gp6/gp15 head completion protein family. Homododecamer. Interacts with the stopper protein gp16. Interacts with the portal protein; this interaction occurs at the end of the packaging when the terminase complex is replaced by the connector.

The protein resides in the virion. Its function is as follows. Head completion protein that exhibits an open central channel for viral DNA ejection. Part of the head-tail connector by binding to the portal protein and to the head completion protein 16. This chain is Head completion protein gp15, found in Bacillus phage SPP1 (Bacteriophage SPP1).